The primary structure comprises 89 residues: Protein YihD (89 aa).

The protein to H.influenzae HI_0845.

The chain is Protein YihD (yihD) from Escherichia coli O157:H7.